The chain runs to 165 residues: Mediator of RNA polymerase II transcription subunit 10 (165 aa).

Disordered stretches follow at residues 54-81 (SLHTRDDPTASTTAPNQYQSTNPNDPAL) and 143-165 (LRGEVDKVIQATGGKKQSERERG). Over residues 62–77 (TASTTAPNQYQSTNPN) the composition is skewed to polar residues.

Belongs to the Mediator complex subunit 10 family. As to quaternary structure, component of the Mediator complex.

The protein resides in the nucleus. Functionally, component of the Mediator complex, a coactivator involved in the regulated transcription of nearly all RNA polymerase II-dependent genes. Mediator functions as a bridge to convey information from gene-specific regulatory proteins to the basal RNA polymerase II transcription machinery. Mediator is recruited to promoters by direct interactions with regulatory proteins and serves as a scaffold for the assembly of a functional preinitiation complex with RNA polymerase II and the general transcription factors. This Emericella nidulans (strain FGSC A4 / ATCC 38163 / CBS 112.46 / NRRL 194 / M139) (Aspergillus nidulans) protein is Mediator of RNA polymerase II transcription subunit 10 (nut2).